Here is a 383-residue protein sequence, read N- to C-terminus: Na(+)/H(+) antiporter NhaA (383 aa).

A run of 11 helical transmembrane segments spans residues 10–30 (LIGG…NNSP), 56–76 (LMHW…GLEI), 91–111 (IITP…IYLS), 121–141 (GWAI…ALLG), 150–170 (LLVI…IAIF), 174–194 (SLSL…IICN), 206–226 (VVLG…ATLA), 254–274 (PWII…ISFS), 289–308 (IIWG…LAVF), 327–347 (GISL…VLAF), and 355–375 (AIKI…YIVL).

It belongs to the NhaA Na(+)/H(+) (TC 2.A.33) antiporter family.

It is found in the cell inner membrane. It catalyses the reaction Na(+)(in) + 2 H(+)(out) = Na(+)(out) + 2 H(+)(in). Functionally, na(+)/H(+) antiporter that extrudes sodium in exchange for external protons. This chain is Na(+)/H(+) antiporter NhaA, found in Francisella tularensis subsp. holarctica (strain FTNF002-00 / FTA).